The following is a 348-amino-acid chain: Maintenance of mitochondrial morphology protein 1 (348 aa).

The Lumenal segment spans residues Met1–Gly35. A helical transmembrane segment spans residues Leu36–Phe56. The Cytoplasmic portion of the chain corresponds to Ser57 to Glu348. Residues Asn114–Pro323 enclose the SMP-LTD domain. Residues Arg328–Glu348 form a disordered region.

It belongs to the MMM1 family. In terms of assembly, homodimer. Component of the ER-mitochondria encounter structure (ERMES) or MDM complex, composed of MMM1, MDM10, MDM12 and MDM34. An MMM1 homodimer associates with one molecule of MDM12 on each side in a pairwise head-to-tail manner, and the SMP-LTD domains of MMM1 and MDM12 generate a continuous hydrophobic tunnel for phospholipid trafficking.

The protein localises to the endoplasmic reticulum membrane. In terms of biological role, component of the ERMES/MDM complex, which serves as a molecular tether to connect the endoplasmic reticulum (ER) and mitochondria. Components of this complex are involved in the control of mitochondrial shape and protein biogenesis, and function in nonvesicular lipid trafficking between the ER and mitochondria. The MDM12-MMM1 subcomplex functions in the major beta-barrel assembly pathway that is responsible for biogenesis of all outer membrane beta-barrel proteins, and acts in a late step after the SAM complex. The MDM10-MDM12-MMM1 subcomplex further acts in the TOM40-specific pathway after the action of the MDM12-MMM1 complex. Essential for establishing and maintaining the structure of mitochondria and maintenance of mtDNA nucleoids. The chain is Maintenance of mitochondrial morphology protein 1 from Clavispora lusitaniae (strain ATCC 42720) (Yeast).